Here is a 335-residue protein sequence, read N- to C-terminus: 4-hydroxy-3-methylbut-2-enyl diphosphate reductase 2 (335 aa).

Position 37 (C37) interacts with [4Fe-4S] cluster. The (2E)-4-hydroxy-3-methylbut-2-enyl diphosphate site is built by H66 and H99. Dimethylallyl diphosphate contacts are provided by H66 and H99. The isopentenyl diphosphate site is built by H66 and H99. Residue C121 coordinates [4Fe-4S] cluster. (2E)-4-hydroxy-3-methylbut-2-enyl diphosphate is bound at residue H149. Dimethylallyl diphosphate is bound at residue H149. Position 149 (H149) interacts with isopentenyl diphosphate. E151 acts as the Proton donor in catalysis. T189 lines the (2E)-4-hydroxy-3-methylbut-2-enyl diphosphate pocket. C219 provides a ligand contact to [4Fe-4S] cluster. S247, S248, N249, and S292 together coordinate (2E)-4-hydroxy-3-methylbut-2-enyl diphosphate. Dimethylallyl diphosphate-binding residues include S247, S248, N249, and S292. Positions 247, 248, 249, and 292 each coordinate isopentenyl diphosphate.

It belongs to the IspH family. Requires [4Fe-4S] cluster as cofactor.

It catalyses the reaction isopentenyl diphosphate + 2 oxidized [2Fe-2S]-[ferredoxin] + H2O = (2E)-4-hydroxy-3-methylbut-2-enyl diphosphate + 2 reduced [2Fe-2S]-[ferredoxin] + 2 H(+). The catalysed reaction is dimethylallyl diphosphate + 2 oxidized [2Fe-2S]-[ferredoxin] + H2O = (2E)-4-hydroxy-3-methylbut-2-enyl diphosphate + 2 reduced [2Fe-2S]-[ferredoxin] + 2 H(+). The protein operates within isoprenoid biosynthesis; dimethylallyl diphosphate biosynthesis; dimethylallyl diphosphate from (2E)-4-hydroxy-3-methylbutenyl diphosphate: step 1/1. It participates in isoprenoid biosynthesis; isopentenyl diphosphate biosynthesis via DXP pathway; isopentenyl diphosphate from 1-deoxy-D-xylulose 5-phosphate: step 6/6. Its function is as follows. Catalyzes the conversion of 1-hydroxy-2-methyl-2-(E)-butenyl 4-diphosphate (HMBPP) into a mixture of isopentenyl diphosphate (IPP) and dimethylallyl diphosphate (DMAPP). Acts in the terminal step of the DOXP/MEP pathway for isoprenoid precursor biosynthesis. Has a higher activity compared with LytB2. Is essential for M.tuberculosis growth in vitro. This chain is 4-hydroxy-3-methylbut-2-enyl diphosphate reductase 2, found in Mycobacterium tuberculosis (strain ATCC 25618 / H37Rv).